Reading from the N-terminus, the 262-residue chain is MKILITNDDGVNSSGIIAARRAVEDLGETIIVAPATQQSGIGHALTLFEPVRVSEVTLRDGSGAYAVSGTHTDAVIIGIFELMDEKPDLVISGINMGENLGKSELTTSGTIGAAMEAAVHGVPSLAVSLQVRRGDIKFHDGHVDVDFSLAAELTGRVASRILRRGLPEGVDFLNLNVPSHPASDEIRITRLGDRMYNVHIKKRLDPRGRPYYWIDGDPAGTDFRVQMSTHLRLKTPPPSPPYHSTAQQALTQWRAGLIRARN.

A divalent metal cation-binding residues include aspartate 8, aspartate 9, serine 39, and asparagine 95.

This sequence belongs to the SurE nucleotidase family. Requires a divalent metal cation as cofactor.

Its subcellular location is the cytoplasm. The catalysed reaction is a ribonucleoside 5'-phosphate + H2O = a ribonucleoside + phosphate. Its function is as follows. Nucleotidase that shows phosphatase activity on nucleoside 5'-monophosphates. This chain is 5'-nucleotidase SurE, found in Methanothermobacter thermautotrophicus (strain ATCC 29096 / DSM 1053 / JCM 10044 / NBRC 100330 / Delta H) (Methanobacterium thermoautotrophicum).